A 696-amino-acid chain; its full sequence is DNA ligase (696 aa).

NAD(+)-binding positions include 36–40 (DAEYD), 85–86 (SL), and E123. Residue K125 is the N6-AMP-lysine intermediate of the active site. Residues R146, E181, K319, and K343 each coordinate NAD(+). Zn(2+)-binding residues include C437, C440, C455, and C461. Residues 618–696 (PEGTSLAGKT…EDGLKALLGL (79 aa)) enclose the BRCT domain.

It belongs to the NAD-dependent DNA ligase family. LigA subfamily. Requires Mg(2+) as cofactor. The cofactor is Mn(2+).

It catalyses the reaction NAD(+) + (deoxyribonucleotide)n-3'-hydroxyl + 5'-phospho-(deoxyribonucleotide)m = (deoxyribonucleotide)n+m + AMP + beta-nicotinamide D-nucleotide.. DNA ligase that catalyzes the formation of phosphodiester linkages between 5'-phosphoryl and 3'-hydroxyl groups in double-stranded DNA using NAD as a coenzyme and as the energy source for the reaction. It is essential for DNA replication and repair of damaged DNA. In Bordetella bronchiseptica (strain ATCC BAA-588 / NCTC 13252 / RB50) (Alcaligenes bronchisepticus), this protein is DNA ligase.